The chain runs to 86 residues: Omega-theraphotoxin-Hhn1e (86 aa).

An N-terminal signal peptide occupies residues 1–21 (MKSIVFVALFGLALLAVVCSA). A propeptide spanning residues 22-50 (SEGAHKELLKEVVRAMVVDKTDAVQAEER) is cleaved from the precursor. 2 disulfides stabilise this stretch: Cys-52/Cys-66 and Cys-65/Cys-78.

The protein belongs to the neurotoxin 10 (Hwtx-1) family. 17 (Hntx-9) subfamily. Expressed by the venom gland.

Its subcellular location is the secreted. In terms of biological role, ion channel inhibitor. The protein is Omega-theraphotoxin-Hhn1e of Cyriopagopus hainanus (Chinese bird spider).